The chain runs to 325 residues: Aldo-keto reductase family 1 member A1 (325 aa).

Alanine 2 bears the N-acetylalanine mark. At serine 4 the chain carries Phosphoserine. NADP(+)-binding positions include 11–20 (GQKMPLIGLG), threonine 21, and tryptophan 22. The residue at position 38 (serine 38) is a Phosphoserine. Aspartate 45 contacts NADP(+). The active-site Proton donor is tyrosine 50. An N6-acetyllysine; alternate modification is found at lysine 127. Lysine 127 is modified (N6-succinyllysine; alternate). Residues serine 162, asparagine 163, serine 211, leucine 213, serine 215, serine 216, lysine 263, serine 264, valine 265, threonine 266, arginine 269, and asparagine 273 each coordinate NADP(+). Serine 211 is modified (phosphoserine).

Belongs to the aldo/keto reductase family. In terms of assembly, monomer.

It localises to the cytoplasm. The protein resides in the cytosol. The protein localises to the apical cell membrane. The catalysed reaction is a primary alcohol + NADP(+) = an aldehyde + NADPH + H(+). It carries out the reaction L-gulonate + NADP(+) = aldehydo-D-glucuronate + NADPH + H(+). The enzyme catalyses L-gulono-1,4-lactone + NADP(+) = D-glucurono-3,6-lactone + NADPH + H(+). It catalyses the reaction allyl alcohol + NADP(+) = acrolein + NADPH + H(+). The catalysed reaction is glycerol + NADP(+) = D-glyceraldehyde + NADPH + H(+). It carries out the reaction glycerol + NADP(+) = L-glyceraldehyde + NADPH + H(+). The enzyme catalyses hydroxyacetone + NADP(+) = methylglyoxal + NADPH + H(+). It catalyses the reaction 3-deoxyfructose + NADP(+) = 3-deoxyglucosone + NADPH + H(+). The catalysed reaction is (R)-mevalonate + NADP(+) = (R)-mevaldate + NADPH + H(+). It carries out the reaction pyridine 3-methanol + NADP(+) = pyridine-3-carbaldehyde + NADPH + H(+). The enzyme catalyses S-nitroso-CoA + NADPH + H(+) = sulfinamide-CoA + NADP(+). It catalyses the reaction S-nitrosoglutathione + NADPH + H(+) = S-(hydroxysulfenamide)glutathione + NADP(+). Its function is as follows. Catalyzes the NADPH-dependent reduction of a wide variety of carbonyl-containing compounds to their corresponding alcohols. Displays enzymatic activity towards endogenous metabolites such as aromatic and aliphatic aldehydes, ketones, monosaccharides and bile acids, with a preference for negatively charged substrates, such as glucuronate and succinic semialdehyde. Plays an important role in ascorbic acid biosynthesis by catalyzing the reduction of D-glucuronic acid and D-glucurono-gamma-lactone. Functions as a detoxifiying enzyme by reducing a range of toxic aldehydes. Reduces methylglyoxal and 3-deoxyglucosone, which are present at elevated levels under hyperglycemic conditions and are cytotoxic. Involved also in the detoxification of lipid-derived aldehydes like acrolein. Plays a role in the activation of procarcinogens, such as polycyclic aromatic hydrocarbon trans-dihydrodiols, and in the metabolism of various xenobiotics and drugs. Also acts as an inhibitor of protein S-nitrosylation by mediating degradation of S-nitroso-coenzyme A (S-nitroso-CoA), a cofactor required to S-nitrosylate proteins. S-nitroso-CoA reductase activity is involved in reprogramming intermediary metabolism in renal proximal tubules, notably by inhibiting protein S-nitrosylation of isoform 2 of PKM (PKM2). Also acts as a S-nitroso-glutathione reductase by catalyzing the NADPH-dependent reduction of S-nitrosoglutathione. Displays no reductase activity towards retinoids. This Bos taurus (Bovine) protein is Aldo-keto reductase family 1 member A1.